Reading from the N-terminus, the 174-residue chain is Transcription antitermination protein NusB (174 aa).

The tract at residues 1-28 (MVEPKKPFMRKPPPKTGDKKPGDRKANR) is disordered. A compositionally biased stretch (basic and acidic residues) spans 16-25 (TGDKKPGDRK).

It belongs to the NusB family.

In terms of biological role, involved in transcription antitermination. Required for transcription of ribosomal RNA (rRNA) genes. Binds specifically to the boxA antiterminator sequence of the ribosomal RNA (rrn) operons. This Rhodopseudomonas palustris (strain BisB5) protein is Transcription antitermination protein NusB.